The primary structure comprises 80 residues: Metallothionein-like protein type 2, MT2-28 (80 aa).

It belongs to the metallothionein superfamily. Type 15 family.

In terms of biological role, metallothioneins have a high content of cysteine residues that bind various heavy metals. The chain is Metallothionein-like protein type 2, MT2-28 from Brassica juncea (Indian mustard).